Here is a 1282-residue protein sequence, read N- to C-terminus: Clustered mitochondria protein homolog (1282 aa).

Residues methionine 1 to glutamine 50 are disordered. Positions proline 16–glutamine 36 are enriched in low complexity. The span at glutamate 37–leucine 47 shows a compositional bias: acidic residues. In terms of domain architecture, Clu spans aspartate 331–methionine 575. Residues glutamate 623–glutamate 650 are a coiled coil. Composition is skewed to basic and acidic residues over residues glutamate 624 to glutamate 661 and valine 668 to aspartate 680. Disordered regions lie at residues glutamate 624 to aspartate 680 and proline 913 to valine 945. TPR repeat units follow at residues alanine 1021–threonine 1054, valine 1063–isoleucine 1096, and isoleucine 1105–valine 1138. The interval valine 1257–alanine 1282 is disordered. A compositionally biased stretch (basic residues) spans lysine 1264–alanine 1282.

It belongs to the CLU family. In terms of assembly, may associate with the eukaryotic translation initiation factor 3 (eIF-3) complex.

The protein localises to the cytoplasm. Functionally, mRNA-binding protein involved in proper cytoplasmic distribution of mitochondria. This chain is Clustered mitochondria protein homolog, found in Neurospora crassa (strain ATCC 24698 / 74-OR23-1A / CBS 708.71 / DSM 1257 / FGSC 987).